The following is a 279-amino-acid chain: Undecaprenyl-diphosphatase (279 aa).

Transmembrane regions (helical) follow at residues 10–30 (FICF…FLPI), 48–68 (LGVS…IYYF), 96–116 (LFLY…LIKL), 128–148 (GLFS…LSEI), 203–223 (SFLV…FSLF), 229–249 (IDII…IFAI), and 259–279 (NNTL…LTTL).

The protein belongs to the UppP family.

The protein resides in the cell inner membrane. It carries out the reaction di-trans,octa-cis-undecaprenyl diphosphate + H2O = di-trans,octa-cis-undecaprenyl phosphate + phosphate + H(+). Catalyzes the dephosphorylation of undecaprenyl diphosphate (UPP). Confers resistance to bacitracin. This is Undecaprenyl-diphosphatase from Prochlorococcus marinus (strain NATL2A).